Here is a 313-residue protein sequence, read N- to C-terminus: Porphobilinogen deaminase 2 (313 aa).

C246 is subject to S-(dipyrrolylmethanemethyl)cysteine.

Belongs to the HMBS family. As to quaternary structure, monomer. Dipyrromethane serves as cofactor.

It carries out the reaction 4 porphobilinogen + H2O = hydroxymethylbilane + 4 NH4(+). Its pathway is porphyrin-containing compound metabolism; protoporphyrin-IX biosynthesis; coproporphyrinogen-III from 5-aminolevulinate: step 2/4. Tetrapolymerization of the monopyrrole PBG into the hydroxymethylbilane pre-uroporphyrinogen in several discrete steps. The chain is Porphobilinogen deaminase 2 (hemC2) from Streptomyces coelicolor (strain ATCC BAA-471 / A3(2) / M145).